A 354-amino-acid chain; its full sequence is Probable L-ascorbate-6-phosphate lactonase UlaG (354 aa).

Belongs to the UlaG family. A divalent metal cation is required as a cofactor.

It localises to the cytoplasm. It catalyses the reaction L-ascorbate 6-phosphate + H2O = 3-dehydro-L-gulonate 6-phosphate. It functions in the pathway cofactor degradation; L-ascorbate degradation; D-xylulose 5-phosphate from L-ascorbate: step 1/4. Its function is as follows. Probably catalyzes the hydrolysis of L-ascorbate-6-P into 3-keto-L-gulonate-6-P. Is essential for L-ascorbate utilization under anaerobic conditions. This is Probable L-ascorbate-6-phosphate lactonase UlaG from Escherichia fergusonii (strain ATCC 35469 / DSM 13698 / CCUG 18766 / IAM 14443 / JCM 21226 / LMG 7866 / NBRC 102419 / NCTC 12128 / CDC 0568-73).